We begin with the raw amino-acid sequence, 126 residues long: UPF0325 protein PBPRA2971 (126 aa).

Belongs to the UPF0325 family.

The protein is UPF0325 protein PBPRA2971 of Photobacterium profundum (strain SS9).